A 1159-amino-acid chain; its full sequence is Reverse gyrase 2 (1159 aa).

The segment at 1 to 40 (MALELIERGCPNCGGVISSDRLEKGLPCSKCLPKPTEEKV) adopts an RG N-terminal-type zinc-finger fold. Zn(2+) is bound by residues cysteine 10, cysteine 13, cysteine 28, and cysteine 31. ATP-binding positions include glutamine 82 and 99-106 (APTGVGKT). A Helicase ATP-binding domain is found at 86 to 275 (AKRVFMNQSF…LFRNLLGFDV (190 aa)). The DEAD box signature appears at 196–199 (DDID). Residues 583–1159 (DLFKTTLVIV…LLKEEKAFKK (577 aa)) are topoisomerase I. A Toprim domain is found at 587–743 (TTLVIVESPN…NIKRAEFHEV (157 aa)). Mg(2+)-binding residues include glutamate 593 and aspartate 712. In terms of domain architecture, Topo IA-type catalytic spans 759-1152 (DLNLVKAQLV…EVHRIKVLLK (394 aa)). The O-(5'-phospho-DNA)-tyrosine intermediate role is filled by tyrosine 902.

In the N-terminal section; belongs to the DEAD box helicase family. DDVD subfamily. This sequence in the C-terminal section; belongs to the type IA topoisomerase family. Monomer. It depends on Zn(2+) as a cofactor. Mg(2+) serves as cofactor.

It localises to the cytoplasm. It catalyses the reaction ATP + H2O = ADP + phosphate + H(+). Functionally, modifies the topological state of DNA by introducing positive supercoils in an ATP-dependent process, increasing the linking number in steps of +1. Binds to single-stranded DNA, transiently cleaves and then rejoins the ends, introducing a positive supercoil in the process. The scissile phosphodiester is attacked by the catalytic tyrosine of the enzyme, resulting in the formation of a DNA-(5'-phosphotyrosyl)-enzyme intermediate. Probably involved in rewinding DNA strands in regions of the chromosome that have opened up to allow replication, transcription, DNA repair and/or for DNA protection. The chain is Reverse gyrase 2 from Aquifex aeolicus (strain VF5).